The primary structure comprises 1378 residues: S-cell enriched with leucine-rich repeat-containing protein slrA (1378 aa).

The helical transmembrane segment at I17–V37 threads the bilayer. 5 N-linked (GlcNAc...) asparagine glycosylation sites follow: N59, N112, N143, N172, and N201. 9 LRR repeats span residues N143 to L165, H167 to K188, S191 to K212, A213 to P235, N236 to R257, S260 to S281, R282 to K304, S307 to H329, and P331 to A353. N265, N287, and N296 each carry an N-linked (GlcNAc...) asparagine glycan. Residues N416, N436, N451, N491, N513, N596, N605, N634, N704, N710, N740, N741, N771, N788, N801, N826, N843, N861, N875, and N907 are each glycosylated (N-linked (GlcNAc...) asparagine). The stretch at S886 to K946 forms a coiled coil. Positions N891–S909 are enriched in low complexity. Residues N891–N945 form a disordered region. A compositionally biased stretch (acidic residues) spans V915–D924. Residues N929–N945 show a composition bias toward low complexity. 4 N-linked (GlcNAc...) asparagine glycosylation sites follow: N953, N970, N1090, and N1100. Residues Y1160–V1180 traverse the membrane as a helical segment. Low complexity predominate over residues D1227–N1276. Residues D1227–K1378 are disordered. Basic and acidic residues predominate over residues D1289–E1304. Acidic residues predominate over residues K1305–T1324. Residues S1328–S1353 are compositionally biased toward low complexity. N-linked (GlcNAc...) asparagine glycans are attached at residues N1331 and N1360. A compositionally biased stretch (polar residues) spans F1354–I1364. Residues K1368–K1378 are compositionally biased toward basic residues.

The protein resides in the membrane. The chain is S-cell enriched with leucine-rich repeat-containing protein slrA (slrA) from Dictyostelium discoideum (Social amoeba).